Reading from the N-terminus, the 198-residue chain is Nucleoside triphosphate pyrophosphatase (198 aa).

D72 (proton acceptor) is an active-site residue.

Belongs to the Maf family. It depends on a divalent metal cation as a cofactor.

The protein localises to the cytoplasm. The catalysed reaction is a ribonucleoside 5'-triphosphate + H2O = a ribonucleoside 5'-phosphate + diphosphate + H(+). It carries out the reaction a 2'-deoxyribonucleoside 5'-triphosphate + H2O = a 2'-deoxyribonucleoside 5'-phosphate + diphosphate + H(+). Nucleoside triphosphate pyrophosphatase. May have a dual role in cell division arrest and in preventing the incorporation of modified nucleotides into cellular nucleic acids. This chain is Nucleoside triphosphate pyrophosphatase, found in Acinetobacter baylyi (strain ATCC 33305 / BD413 / ADP1).